We begin with the raw amino-acid sequence, 102 residues long: Carboxysome shell protein CcmK2 (102 aa).

One can recognise a BMC domain in the interval 4–90 (AVGMIETLGF…PHENLEYVLP (87 aa)).

Belongs to the bacterial microcompartments protein family. CcmK subfamily. As to quaternary structure, homohexamer. Interacts with CcmO in the carboxysome. Interacts with CcmN.

The protein resides in the carboxysome. In terms of biological role, one of the shell proteins of the carboxysome, a polyhedral inclusion where RuBisCO (ribulose bisphosphate carboxylase, rbcL-rbcS) is sequestered. Assembles into hexamers which make sheets that form the facets of the polyhedral carboxysome. The hexamer central pore probably regulates metabolite flux. Functionally, the major shell protein of the carboxysome, a polyhedral inclusion where RuBisCO (ribulose bisphosphate carboxylase, rbcL-rbcS) is sequestered. Hexamers make sheets that form the facets of the polyhedral carboxysome. The shell is 4.5 nm thick, as observed for CcmK hexamers. Required for recruitment of CcmO to the pre-carboxysome. In PCC 7942 there are several CcmK paralogs with presumably functional differences; replacing the central pore residues (34-37) with those of either CcmK4 from this organism (Tyr-Met-Arg-Ala) or from an alpha-type carboxysome forming cyanobacterium (CsoS1 of P.marinus strain MIT 9313, Arg-Glu-Phe-Val) allows the bacterium to make carboxysomes, but the expression level is too low to know if the carboxysome is functional for CO(2) fixation. Its function is as follows. Beta-carboxysome assembly initiates when soluble RuBisCO is condensed into a liquid matrix in a pre-carboxysome by the RbcS-like domains of probably both CcmM58 and CcmM35. CcmN interacts with the N-terminus of CcmM58, and then recruits the CcmK2 major shell protein via CcmN's encapsulation peptide. Shell formation requires CcmK proteins and CcmO. CcmL caps the otherwise elongated carboxysome. Once fully encapsulated carboxysomes are formed, they migrate within the cell probably via interactions with the cytoskeleton. The sequence is that of Carboxysome shell protein CcmK2 from Synechococcus elongatus (strain ATCC 33912 / PCC 7942 / FACHB-805) (Anacystis nidulans R2).